Here is a 117-residue protein sequence, read N- to C-terminus: Venom nerve growth factor (117 aa).

3 disulfide bridges follow: C12-C77, C55-C105, and C65-C107. N-linked (GlcNAc...) asparagine glycosylation occurs at N21.

Belongs to the NGF-beta family. Homodimer; non-covalently linked. As to expression, expressed by the venom gland.

It is found in the secreted. Its function is as follows. Nerve growth factor is important for the development and maintenance of the sympathetic and sensory nervous systems. It stimulates division and differentiation of sympathetic and embryonic sensory neurons as well as basal forebrain cholinergic neurons in the brain. Its relevance in the snake venom is not clear. However, it has been shown to inhibit metalloproteinase-dependent proteolysis of platelet glycoprotein Ib alpha, suggesting a metalloproteinase inhibition to prevent metalloprotease autodigestion and/or protection against prey proteases. Binds a lipid between the two protein chains in the homodimer. The lipid-bound form promotes histamine relase from mouse mast cells, contrary to the lipid-free form. The sequence is that of Venom nerve growth factor from Daboia russelii (Russel's viper).